A 201-amino-acid polypeptide reads, in one-letter code: Small ribosomal subunit protein uS4c (201 aa).

The tract at residues 15-43 is disordered; the sequence is LGALPGLTSKRPRPGSDLRNQSRSGKRSQ. The S4 RNA-binding domain maps to 89–150; the sequence is MRLDNILFRL…EQRSRALIQN (62 aa).

It belongs to the universal ribosomal protein uS4 family. In terms of assembly, part of the 30S ribosomal subunit. Contacts protein S5. The interaction surface between S4 and S5 is involved in control of translational fidelity.

It is found in the plastid. The protein localises to the chloroplast. One of the primary rRNA binding proteins, it binds directly to 16S rRNA where it nucleates assembly of the body of the 30S subunit. In terms of biological role, with S5 and S12 plays an important role in translational accuracy. The chain is Small ribosomal subunit protein uS4c (rps4) from Liriodendron tulipifera (Tuliptree).